A 595-amino-acid chain; its full sequence is Aspartate--tRNA(Asp/Asn) ligase (595 aa).

Glu-175 is a binding site for L-aspartate. The interval 199 to 202 is aspartate; the sequence is QQYK. L-aspartate-binding residues include Arg-221 and His-454. Residue 221-223 coordinates ATP; it reads RDE. Residue Glu-488 participates in ATP binding. Residue Arg-495 coordinates L-aspartate. Position 540–543 (540–543) interacts with ATP; sequence GIDR.

The protein belongs to the class-II aminoacyl-tRNA synthetase family. Type 1 subfamily. In terms of assembly, homodimer.

It is found in the cytoplasm. The catalysed reaction is tRNA(Asx) + L-aspartate + ATP = L-aspartyl-tRNA(Asx) + AMP + diphosphate. Aspartyl-tRNA synthetase with relaxed tRNA specificity since it is able to aspartylate not only its cognate tRNA(Asp) but also tRNA(Asn). Reaction proceeds in two steps: L-aspartate is first activated by ATP to form Asp-AMP and then transferred to the acceptor end of tRNA(Asp/Asn). The protein is Aspartate--tRNA(Asp/Asn) ligase of Sinorhizobium medicae (strain WSM419) (Ensifer medicae).